Reading from the N-terminus, the 1107-residue chain is MVFDARLGYDPDEWEECPEPEHFLVFSGFTRYMLTFAAIAFVYYFFKLLDDKNKKESGEKEEPQTSVESVLAKAGDKLHDVKEQVQQHIPESAEELMREADQYLKEQAHSVQNNVHQFAEQAANKFPSLEVDLNLGHPIDATREKFDTVLSSVNNHLHETKNMDLSPTSRDSTQFEQIPSIAPEESAFGHDFEHVPPHLKTAAEQYYAQQHQPPPVPQHKIVQPVPISPTDQQLLHEFDIYDAPAHQRMNQISEQLGQLGQKTPAQLQQLQHAQLAHQQLQQQGVFQPIQQPSPLQIQTHPQQPYFDFSQLSPASQARYNQQQFVDISQLSPGAGALIAEQQASGAFQPVTKKLGREKRLSEQDERALQDWEKEKALLEADRLKKLLDHEVGGDSTDLDSSQKAYDHFAPASHISYESHSGAAQIQPMTPTAPKRADVPAPQVTSITNVRDSQLTDYDISDFHAHDEPHYHTVLTPQQLQQNQQQHQQPSAIDRRRTTADSDDYVKVSEPIYDYPPKGHEAPVAEPKRISPTEAAQLQELYQEYDLGLDLPGVAPIQGVAKPPVQQRTPLQIQQQVVQNVQNQPNMMARQNSVPESPRTVINVPISRKTDVPIQVQQQQNQFSYNVPIQVKDDPRNLATADLFVQDAQEYVAHQQNQQDKGSFVMEEEMLSLHEPETGSNKKKLTPKNPSFEATSRQVRTNDVFERIEHDEHDDMTYAPEIQSVEIPPDQMSETSENMIDYFDKVAAESEQQIQHLQEQQNTLKKQQIETSIPDSSLLKPVGRAPQILPAFGNRISSNSSLGSAGRSGSGVSSSDVYPYRHLRKQSSLLSVLGVTSMQEMLLAITSLDSLSEAMRKAGLETTNLIFGIDYTASNKYQGEESFGGRSLHTIHPHVTNPYQQVISILGRTLAPFAGQGRLGVYGFGDAKTGDWSVFNLKGEGGDCRSLDEVLNVYNTVTPTVALSGPTNFAPLIYQAMEICQKSRDYHILVIIADGQVTNERATRRAIVQACQHPLSIIVVGVGDGPWDMMRIFDESLPKRPWDNFHFVEFHEIVKKSTNMEDGDVKLAVQSLLEIPDQYRCICELGLLDRSIPPRGSEIRREMMHNPL.

Residues 1-22 are Extracellular-facing; the sequence is MVFDARLGYDPDEWEECPEPEH. A helical transmembrane segment spans residues 23 to 45; sequence FLVFSGFTRYMLTFAAIAFVYYF. The Cytoplasmic portion of the chain corresponds to 46–1107; that stretch reads FKLLDDKNKK…IRREMMHNPL (1062 aa). Positions 67-124 form a coiled coil; it reads VESVLAKAGDKLHDVKEQVQQHIPESAEELMREADQYLKEQAHSVQNNVHQFAEQAAN. Positions 478 to 488 are enriched in low complexity; it reads QLQQNQQQHQQ. 2 disordered regions span residues 478–501 and 673–698; these read QLQQ…TADS and HEPE…SRQV. The span at 492–501 shows a compositional bias: basic and acidic residues; the sequence is IDRRRTTADS. Over residues 687–698 the composition is skewed to polar residues; sequence KNPSFEATSRQV. Residues 863–1023 form the VWFA domain; sequence NLIFGIDYTA…LSIIVVGVGD (161 aa).

This sequence belongs to the copine family. As to quaternary structure, may interact (via VWFA domain) with unc-89 (via Ig-like C2-type 1-3) and unc-96 (via C-terminus); cpna-1 binding sites for unc-89 and unc-96 are different. May interact with pat-6. May interact with lim-9 (via LIM domains) and with scpl-1 (via FCP1 homology domain). In terms of tissue distribution, expressed in body wall muscles (at protein level).

Its subcellular location is the basal cell membrane. It localises to the cytoplasm. It is found in the myofibril. The protein resides in the sarcomere. The protein localises to the m line. In terms of biological role, involved in the assembly of dense bodies and M lines during body wall muscle development. Acts by recruiting downstream of integrin-associated protein pat-6/actopaxin several dense bodies and M line components including unc-89, lim-9, scpl-1 and unc-96 to integrin-mediated attachment sites. This is Copine family protein 1 from Caenorhabditis elegans.